The sequence spans 290 residues: MASLKDMRVRIASTKATQKITKAMQMVAASKLRRAQTAAEAARPYADKMSAVISNIAGAAAGSPGAPALLAGTGRDQVHLLLVCTGERGLSGAFNSSIVRLARERALALMAQGKEVKFFCVGRKGYEQLRRQFDKQIVEHLDLRSVRQLGFVNAEDIAKKVLARFEAGEFDVCTLFYSRFRSVIAQIPTAQQIIPLVVEEGTAASTTSYEYEPEEDEILTRLLPRNLAVQIFRALLENNASFYGAQMSAMDNATRNAGEMIRKQTLVYNRTRQAQITKELIEIISGAEAV.

It belongs to the ATPase gamma chain family. As to quaternary structure, F-type ATPases have 2 components, CF(1) - the catalytic core - and CF(0) - the membrane proton channel. CF(1) has five subunits: alpha(3), beta(3), gamma(1), delta(1), epsilon(1). CF(0) has three main subunits: a, b and c.

The protein localises to the cell inner membrane. In terms of biological role, produces ATP from ADP in the presence of a proton gradient across the membrane. The gamma chain is believed to be important in regulating ATPase activity and the flow of protons through the CF(0) complex. The chain is ATP synthase gamma chain from Bradyrhizobium diazoefficiens (strain JCM 10833 / BCRC 13528 / IAM 13628 / NBRC 14792 / USDA 110).